The following is a 228-amino-acid chain: Ran-binding protein 1 homolog a (228 aa).

A compositionally biased stretch (basic and acidic residues) spans 1-13 (MATNEPEHEHRDE). Disordered regions lie at residues 1–30 (MATN…QVAP) and 159–228 (SEEE…GPST). The span at 14–24 (EEAGANEDEDT) shows a compositional bias: acidic residues. The region spanning 27–162 (QVAPIVRLEE…FKEVAESEEE (136 aa)) is the RanBD1 domain. Residues 179–228 (LTVEETKTEEKTEAKAVETAKTEVKAEEKKESEAEKSGEAKKTEESGPST) show a composition bias toward basic and acidic residues.

In terms of assembly, interacts with the GTP-bound form of RAN1, RAN2 and RAN3. Ubiquitous. Preferentially expressed in root tips and gynoecium.

Its subcellular location is the nucleus. The protein localises to the nuclear pore complex. This chain is Ran-binding protein 1 homolog a (RANBP1A), found in Arabidopsis thaliana (Mouse-ear cress).